Here is a 174-residue protein sequence, read N- to C-terminus: RNA pyrophosphohydrolase (174 aa).

In terms of domain architecture, Nudix hydrolase spans 6 to 149 (GYRPNVGIIL…KRDVYLGALK (144 aa)). The short motif at 38-59 (GGIKPGESPETAMYRELYEEVG) is the Nudix box element.

It belongs to the Nudix hydrolase family. RppH subfamily. The cofactor is a divalent metal cation.

Functionally, accelerates the degradation of transcripts by removing pyrophosphate from the 5'-end of triphosphorylated RNA, leading to a more labile monophosphorylated state that can stimulate subsequent ribonuclease cleavage. This chain is RNA pyrophosphohydrolase, found in Neisseria meningitidis serogroup C / serotype 2a (strain ATCC 700532 / DSM 15464 / FAM18).